Consider the following 158-residue polypeptide: NAD(P)H-quinone oxidoreductase subunit N (158 aa).

It belongs to the complex I NdhN subunit family. As to quaternary structure, NDH-1 can be composed of about 15 different subunits; different subcomplexes with different compositions have been identified which probably have different functions.

It localises to the cellular thylakoid membrane. The catalysed reaction is a plastoquinone + NADH + (n+1) H(+)(in) = a plastoquinol + NAD(+) + n H(+)(out). It carries out the reaction a plastoquinone + NADPH + (n+1) H(+)(in) = a plastoquinol + NADP(+) + n H(+)(out). Its function is as follows. NDH-1 shuttles electrons from an unknown electron donor, via FMN and iron-sulfur (Fe-S) centers, to quinones in the respiratory and/or the photosynthetic chain. The immediate electron acceptor for the enzyme in this species is believed to be plastoquinone. Couples the redox reaction to proton translocation, and thus conserves the redox energy in a proton gradient. Cyanobacterial NDH-1 also plays a role in inorganic carbon-concentration. This is NAD(P)H-quinone oxidoreductase subunit N from Cyanothece sp. (strain PCC 7425 / ATCC 29141).